We begin with the raw amino-acid sequence, 1380 residues long: Tripeptidyl-peptidase 2 (1380 aa).

A Peptidase S8 domain is found at 110 to 619 (STFIASLMPK…QGLMQVDKAY (510 aa)). Active-site charge relay system residues include aspartate 145, histidine 372, and serine 558. Residues 1099-1143 (DEKEGKNPKDNPVSYPISYVVPPNKPEEDKKAASAPTCSKSVSER) are disordered. The segment covering 1110–1120 (PVSYPISYVVP) has biased composition (low complexity). Coiled-coil stretches lie at residues 1152-1181 (KIKF…KSEY) and 1238-1300 (EDDE…ELTK).

The protein belongs to the peptidase S8 family. Assembles into a large oligomeric complex containing two related proteins 153 and 142 kDa that are derived from the single TPP2 gene. The 142 kDa form mainly differs from the 153 kDa form by a truncation at the C-terminal end.

The catalysed reaction is Release of an N-terminal tripeptide from a polypeptide.. With respect to regulation, inhibited by alanine-alanine-phenylalanine-chloromethylketone, butabindide and phenylmethanesulfonyl fluoride (PMSF), but not by leupeptin, N-ethylmaleimide, EDTA, MG132 and lactacystin. Functionally, serine protease of the proteasome pathway that may function with the 20S proteasome to degrade oxidized proteins generated by environmental stress. This is Tripeptidyl-peptidase 2 (TPP2) from Arabidopsis thaliana (Mouse-ear cress).